Reading from the N-terminus, the 108-residue chain is MSSAQSRGGKTGGKVGGKVGAKRHKKTQKEHINGITKPAIRRLARRGGVKRISFPIYEETRNVLRTFLTNVIRDSVAYTEHAGRRTVTAMDVVYALKRQGRTLYGFNS.

A disordered region spans residues 1 to 36 (MSSAQSRGGKTGGKVGGKVGAKRHKKTQKEHINGIT). The span at 9–19 (GKTGGKVGGKV) shows a compositional bias: gly residues.

This sequence belongs to the histone H4 family. As to quaternary structure, the nucleosome is a histone octamer containing two molecules each of H2A, H2B, H3 and H4 assembled in one H3-H4 heterotetramer and two H2A-H2B heterodimers. The octamer wraps approximately 147 bp of DNA.

It localises to the nucleus. Its subcellular location is the chromosome. Core component of nucleosome. Nucleosomes wrap and compact DNA into chromatin, limiting DNA accessibility to the cellular machineries which require DNA as a template. Histones thereby play a central role in transcription regulation, DNA repair, DNA replication and chromosomal stability. DNA accessibility is regulated via a complex set of post-translational modifications of histones, also called histone code, and nucleosome remodeling. The chain is Histone H4 (H4a) from Dictyostelium discoideum (Social amoeba).